We begin with the raw amino-acid sequence, 389 residues long: MPLPTNQLRLAMVAGEPSGDLLAASLLGGLRERLPESAQYYGIGGQRMIAQGFDSHWQMDKLTVRGYVEALGQIPEILRIRGELKRQLLAERPAAFIGVDAPDFNFNVEQAARDAGIPSIHFVCPSIWAWRGGRIKKIAKSVDHMLCLFPFEPAILDKAGVASTYVGHPLADDIPLEPDTHGARIALGLPADGPVIAVLPGSRRSEIALIGPTFFAAMALMQQREPGVRFVMPAATPALRELLQPLVDAHPQLALTITDGRSQVAMTAADAILVKSGTVTLEAALLKKPMVISYKVPWLTGQIMRRQGYLPYVGLPNILAGRFVVPELLQHFATPEALADATLTQLSDDANRRTLTEVFTEMHLSLRQNTAAKAAEAVVRVLEQRKGRA.

It belongs to the LpxB family.

It carries out the reaction a lipid X + a UDP-2-N,3-O-bis[(3R)-3-hydroxyacyl]-alpha-D-glucosamine = a lipid A disaccharide + UDP + H(+). Its pathway is bacterial outer membrane biogenesis; LPS lipid A biosynthesis. Functionally, condensation of UDP-2,3-diacylglucosamine and 2,3-diacylglucosamine-1-phosphate to form lipid A disaccharide, a precursor of lipid A, a phosphorylated glycolipid that anchors the lipopolysaccharide to the outer membrane of the cell. In Burkholderia cenocepacia (strain HI2424), this protein is Lipid-A-disaccharide synthase.